A 181-amino-acid polypeptide reads, in one-letter code: Endoribonuclease YbeY (181 aa).

Zn(2+) is bound by residues histidine 115, histidine 119, and histidine 125.

The protein belongs to the endoribonuclease YbeY family. Zn(2+) is required as a cofactor.

Its subcellular location is the cytoplasm. In terms of biological role, single strand-specific metallo-endoribonuclease involved in late-stage 70S ribosome quality control and in maturation of the 3' terminus of the 16S rRNA. The chain is Endoribonuclease YbeY from Bifidobacterium animalis subsp. lactis (strain AD011).